The following is a 560-amino-acid chain: Eukaryotic translation initiation factor 3 subunit D-1 (560 aa).

Residues 98-166 (VQKPPHQRGR…RGPPPKMRES (69 aa)) are disordered. The segment covering 100-121 (KPPHQRGRFRNMRNSRSGRGRN) has biased composition (basic residues). The residue at position 128 (threonine 128) is a Phosphothreonine. Over residues 147 to 156 (GRGMGKKFGH) the composition is skewed to basic residues. Positions 291 to 305 (EFDLLTVNESSVEPP) are RNA gate.

The protein belongs to the eIF-3 subunit D family. Component of the eukaryotic translation initiation factor 3 (eIF-3) complex. The eIF-3 complex interacts with pix.

Its subcellular location is the cytoplasm. MRNA cap-binding component of the eukaryotic translation initiation factor 3 (eIF-3) complex, which is involved in protein synthesis of a specialized repertoire of mRNAs and, together with other initiation factors, stimulates binding of mRNA and methionyl-tRNAi to the 40S ribosome. The eIF-3 complex specifically targets and initiates translation of a subset of mRNAs involved in cell proliferation. In the eIF-3 complex, eif3d specifically recognizes and binds the 7-methylguanosine cap of a subset of mRNAs. The chain is Eukaryotic translation initiation factor 3 subunit D-1 from Drosophila sechellia (Fruit fly).